Here is a 508-residue protein sequence, read N- to C-terminus: Zinc finger CCCH-type with G patch domain-containing protein (508 aa).

Residues 67-86 (QQESSHHDSGTPETDTKTSV) are disordered. Residues 69–86 (ESSHHDSGTPETDTKTSV) are compositionally biased toward basic and acidic residues. The segment at 161–188 (RSMVPCPYFLEGKCKFAGAECRFSHGYL) adopts a C3H1-type zinc-finger fold. Positions 253–282 (IYPLGPEEVESDSESDSQSDTGDSSSSKAA) are disordered. Acidic residues predominate over residues 259 to 269 (EEVESDSESDS). Low complexity predominate over residues 270-279 (QSDTGDSSSS). In terms of domain architecture, G-patch spans 310–356 (TKGIGSKLMAKMGYIFGKGLGKDGEGRVEPIEVVVLPQGKSLDKCAE). The interval 404–426 (SLHDLRVSHPGAKPDIRKTRKSA) is disordered.

The protein localises to the nucleus. Functionally, transcription repressor. The protein is Zinc finger CCCH-type with G patch domain-containing protein of Nematostella vectensis (Starlet sea anemone).